The primary structure comprises 260 residues: Ribosomal RNA small subunit methyltransferase J (260 aa).

Residues 101–102 (RD), 117–118 (ER), 153–154 (SS), and Asp176 each bind S-adenosyl-L-methionine.

This sequence belongs to the methyltransferase superfamily. RsmJ family.

It is found in the cytoplasm. The catalysed reaction is guanosine(1516) in 16S rRNA + S-adenosyl-L-methionine = N(2)-methylguanosine(1516) in 16S rRNA + S-adenosyl-L-homocysteine + H(+). Functionally, specifically methylates the guanosine in position 1516 of 16S rRNA. The polypeptide is Ribosomal RNA small subunit methyltransferase J (Aliivibrio salmonicida (strain LFI1238) (Vibrio salmonicida (strain LFI1238))).